A 367-amino-acid chain; its full sequence is Peptide chain release factor 2 (367 aa).

Gln-254 is modified (N5-methylglutamine).

It belongs to the prokaryotic/mitochondrial release factor family. Methylated by PrmC. Methylation increases the termination efficiency of RF2.

It is found in the cytoplasm. Peptide chain release factor 2 directs the termination of translation in response to the peptide chain termination codons UGA and UAA. This Bordetella avium (strain 197N) protein is Peptide chain release factor 2.